The chain runs to 329 residues: Prostaglandin reductase 1 (329 aa).

Thr18 is subject to Phosphothreonine. Ser20 bears the Phosphoserine mark. Residues 152-155 (GAVG), Lys178, Tyr193, Asn217, 239-245 (CGAISVY), 270-272 (FVV), and Asn321 each bind NADP(+). Residue Lys178 is modified to N6-(2-hydroxyisobutyryl)lysine; alternate. Lys178 is modified (N6-acetyllysine; alternate).

The protein belongs to the NADP-dependent oxidoreductase L4BD family. In terms of assembly, monomer or homodimer.

Its subcellular location is the cytoplasm. The catalysed reaction is 13,14-dihydro-15-oxo-prostaglandin E1 + NADP(+) = 15-oxoprostaglandin E1 + NADPH + H(+). The enzyme catalyses 13,14-dihydro-15-oxo-prostaglandin E2 + NADP(+) = 15-oxoprostaglandin E2 + NADPH + H(+). It catalyses the reaction 13,14-dihydro-15-oxo-prostaglandin F1alpha + NADP(+) = 15-oxoprostaglandin F1alpha + NADPH + H(+). It carries out the reaction 13,14-dihydro-15-oxo-PGF2alpha + NADP(+) = 15-oxoprostaglandin F2alpha + NADPH + H(+). The catalysed reaction is leukotriene B4 + NADP(+) = 12-oxo-leukotriene B4 + NADPH + H(+). The enzyme catalyses 20-hydroxy-leukotriene B4 + NADP(+) = 12-oxo-20-hydroxy-leukotriene B4 + NADPH + H(+). It catalyses the reaction 6-trans-leukotriene B4 + NADP(+) = 12-oxo-(5S)-hydroxy-(6E,8E,10E,14Z)-eicosatetraenoate + NADPH + H(+). It carries out the reaction (5S,12S)-dihydroxy-(6E,10E,12E,14Z)-eicosatetraenoate + NADP(+) = 12-oxo-(5S)-hydroxy-(6E,8E,10E,14Z)-eicosatetraenoate + NADPH + H(+). The catalysed reaction is an n-alkanal + NADP(+) = an alk-2-enal + NADPH + H(+). The enzyme catalyses hexanal + NADP(+) = (E)-hex-2-enal + NADPH + H(+). It catalyses the reaction octanal + NADP(+) = (2E)-octenal + NADPH + H(+). It carries out the reaction decanal + NADP(+) = (2E)-decenal + NADPH + H(+). The catalysed reaction is dodecanal + NADP(+) = (2E)-dodecenal + NADPH + H(+). The enzyme catalyses 4-hydroxynonanal + NADP(+) = (E)-4-hydroxynon-2-enal + NADPH + H(+). It catalyses the reaction pentan-2-one + NADP(+) = (E)-pent-3-en-2-one + NADPH + H(+). It carries out the reaction nonan-2-one + NADP(+) = (3E)-nonen-2-one + NADPH + H(+). Functionally, NAD(P)H-dependent oxidoreductase involved in metabolic inactivation of pro- and anti-inflammatory eicosanoids: prostaglandins (PG), leukotrienes (LT) and lipoxins (LX). Catalyzes with high efficiency the reduction of the 13,14 double bond of 15-oxoPGs, including 15-oxo-PGE1, 15-oxo-PGE2, 15-oxo-PGF1-alpha and 15-oxo-PGF2-alpha. Catalyzes with lower efficiency the oxidation of the hydroxyl group at C12 of LTB4 and its derivatives, converting them into biologically less active 12-oxo-LTB4 metabolites. Reduces 15-oxo-LXA4 to 13,14 dihydro-15-oxo-LXA4, enhancing neutrophil recruitment at the inflammatory site. Plays a role in metabolic detoxification of alkenals and ketones. Reduces alpha,beta-unsaturated alkenals and ketones, particularly those with medium-chain length, showing highest affinity toward (2E)-decenal and (3E)-3-nonen-2-one. May inactivate 4-hydroxy-2-nonenal, a cytotoxic lipid constituent of oxidized low-density lipoprotein particles. The protein is Prostaglandin reductase 1 (PTGR1) of Bos taurus (Bovine).